A 277-amino-acid chain; its full sequence is Large ribosomal subunit protein uL2c (277 aa).

Positions 224-257 (VMNPIDHPHGGGEGRAPIGRKKPLTPWGHPALGR) are disordered.

The protein belongs to the universal ribosomal protein uL2 family. In terms of assembly, part of the 50S ribosomal subunit.

The protein localises to the plastid. Its subcellular location is the chloroplast. This is Large ribosomal subunit protein uL2c (rpl2) from Anthoceros angustus (Hornwort).